The sequence spans 360 residues: S-adenosylmethionine:tRNA ribosyltransferase-isomerase (360 aa).

This sequence belongs to the QueA family. Monomer.

The protein localises to the cytoplasm. The catalysed reaction is 7-aminomethyl-7-carbaguanosine(34) in tRNA + S-adenosyl-L-methionine = epoxyqueuosine(34) in tRNA + adenine + L-methionine + 2 H(+). It participates in tRNA modification; tRNA-queuosine biosynthesis. Transfers and isomerizes the ribose moiety from AdoMet to the 7-aminomethyl group of 7-deazaguanine (preQ1-tRNA) to give epoxyqueuosine (oQ-tRNA). This chain is S-adenosylmethionine:tRNA ribosyltransferase-isomerase, found in Nitrobacter winogradskyi (strain ATCC 25391 / DSM 10237 / CIP 104748 / NCIMB 11846 / Nb-255).